The primary structure comprises 434 residues: Peptidase B (434 aa).

Mn(2+) is bound by residues Lys198 and Asp203. The active site involves Lys210. Asp221, Asp280, and Glu282 together coordinate Mn(2+). Residue Arg284 is part of the active site.

It belongs to the peptidase M17 family. As to quaternary structure, homohexamer. Requires Mn(2+) as cofactor.

The protein localises to the cytoplasm. It catalyses the reaction Release of an N-terminal amino acid, Xaa, from a peptide or arylamide. Xaa is preferably Glu or Asp but may be other amino acids, including Leu, Met, His, Cys and Gln.. In terms of biological role, probably plays an important role in intracellular peptide degradation. The sequence is that of Peptidase B from Pasteurella multocida (strain Pm70).